The sequence spans 203 residues: MNKQSHYSIKSNFLSKSEKKISIDHYDEADGPSLSSSSSVISKNDLSREKIINRIKNLIDNKFSYNKNIKICTIIKNKCMIIQTIKDMLFSTNLYFIIKIKKSFGLFNSVYVKFFDKDIFENSALNLYNNAYELAKKNSTDIVLEKNILLKNELIAECKTRNYNMALDMYSHKFVYDTYCRKVFVVDDNVVLKKYKIYAHIVD.

The protein belongs to the mimivirus L332/L333/L334 family.

This is an uncharacterized protein from Acanthamoeba polyphaga mimivirus (APMV).